A 184-amino-acid chain; its full sequence is NADH-quinone oxidoreductase subunit B (184 aa).

Positions 63, 64, 128, and 158 each coordinate [4Fe-4S] cluster.

The protein belongs to the complex I 20 kDa subunit family. As to quaternary structure, NDH-1 is composed of 14 different subunits. Subunits NuoB, C, D, E, F, and G constitute the peripheral sector of the complex. Requires [4Fe-4S] cluster as cofactor.

The protein localises to the cell inner membrane. It carries out the reaction a quinone + NADH + 5 H(+)(in) = a quinol + NAD(+) + 4 H(+)(out). NDH-1 shuttles electrons from NADH, via FMN and iron-sulfur (Fe-S) centers, to quinones in the respiratory chain. The immediate electron acceptor for the enzyme in this species is believed to be ubiquinone. Couples the redox reaction to proton translocation (for every two electrons transferred, four hydrogen ions are translocated across the cytoplasmic membrane), and thus conserves the redox energy in a proton gradient. This is NADH-quinone oxidoreductase subunit B from Xylella fastidiosa (strain M12).